A 250-amino-acid polypeptide reads, in one-letter code: Hydroxyacylglutathione hydrolase (250 aa).

The Zn(2+) site is built by histidine 53, histidine 55, aspartate 57, histidine 58, histidine 110, aspartate 127, and histidine 165.

This sequence belongs to the metallo-beta-lactamase superfamily. Glyoxalase II family. In terms of assembly, monomer. Requires Zn(2+) as cofactor.

The enzyme catalyses an S-(2-hydroxyacyl)glutathione + H2O = a 2-hydroxy carboxylate + glutathione + H(+). The protein operates within secondary metabolite metabolism; methylglyoxal degradation; (R)-lactate from methylglyoxal: step 2/2. Functionally, thiolesterase that catalyzes the hydrolysis of S-D-lactoyl-glutathione to form glutathione and D-lactic acid. This Photorhabdus laumondii subsp. laumondii (strain DSM 15139 / CIP 105565 / TT01) (Photorhabdus luminescens subsp. laumondii) protein is Hydroxyacylglutathione hydrolase.